We begin with the raw amino-acid sequence, 551 residues long: Interferon-induced, double-stranded RNA-activated protein kinase (551 aa).

A2 bears the N-acetylalanine mark. Residues 2–180 (AGDLSAGFFM…SVKSDYLSSG (179 aa)) are (Microbial infection) Interaction with HCV NS5A. One can recognise a DRBM 1 domain in the interval 9–77 (FFMEELNTYR…AKLAVEILNK (69 aa)). K69 is covalently cross-linked (Glycyl lysine isopeptide (Lys-Gly) (interchain with G-Cter in ISG15)). S83 carries the post-translational modification Phosphoserine. A phosphothreonine; by autocatalysis mark is found at T88, T89, and T90. The region spanning 100–167 (NYIGLINRIA…AKLAYLQILS (68 aa)) is the DRBM 2 domain. Y101 is subject to Phosphotyrosine; by autocatalysis. Residue K159 forms a Glycyl lysine isopeptide (Lys-Gly) (interchain with G-Cter in ISG15) linkage. Y162 carries the post-translational modification Phosphotyrosine; by autocatalysis. A compositionally biased stretch (polar residues) spans 202-215 (SSSEGDFSADTSEI). The interval 202 to 222 (SSSEGDFSADTSEINSNSDSL) is disordered. Position 242 is a phosphoserine; by autocatalysis (S242). Phosphothreonine; by autocatalysis occurs at positions 255 and 258. The segment at 266 to 362 (DFKEIELIGS…NSSRSKTKCL (97 aa)) is dimerization. The interval 266-551 (DFKEIELIGS…SPEKNERHTC (286 aa)) is interaction with TRAF5. Residues 267–538 (FKEIELIGSG…TSEILRTLTV (272 aa)) form the Protein kinase domain. 273-281 (IGSGGFGQV) serves as a coordination point for ATP. Phosphotyrosine; by autocatalysis is present on Y293. K296 serves as a coordination point for ATP. Tandem repeats lie at residues 331-343 (DYDP…SLES) and 345-357 (DYDP…SSRS). The interval 331 to 357 (DYDPETSDDSLESSDYDPENSKNSSRS) is 2 X 13 AA approximate repeats. Positions 379 to 496 (EKRRGEKLDK…TAFETSKFFT (118 aa)) are interaction with EIF2S1/EIF-2ALPHA. The active-site Proton acceptor is D414. Residue D432 coordinates Mg(2+). T446 and T451 each carry phosphothreonine; by autocatalysis. Phosphoserine occurs at positions 456 and 542.

This sequence belongs to the protein kinase superfamily. Ser/Thr protein kinase family. GCN2 subfamily. In terms of assembly, homodimer. Interacts with STRBP. Interacts with DNAJC3. Forms a complex with FANCA, FANCC, FANCG and HSP70. Interacts with ADAR/ADAR1. Interacts with IRS1. The inactive form interacts with NCK1 and GSN. Interacts (via the kinase catalytic domain) with STAT3 (via SH2 domain), TRAF2 (C-terminus), TRAF5 (C-terminus) and TRAF6 (C-terminus). Interacts with MAP2K6, IKBKB/IKKB, NPM1, TARBP2, NLRP1, NLRP3, NLRC4 and AIM2. Interacts (via DRBM 1 domain) with DUS2L (via DRBM domain). Interacts with DHX9 (via N-terminus) and this interaction is dependent upon activation of the kinase. Interacts with EIF2S1/EIF-2ALPHA; this interaction induces a conformational change in EIF2S1 and its phosphorylation by EIF2AK2. (Microbial infection) Interacts with human cytomegalovirus (HCMV) TRS1; this interaction retains EIF2AK2 to the nucleus and prevents its activation. As to quaternary structure, (Microbial infection) Interacts with vaccinia virus protein K3 (K3L); this interaction inhibits EIF2AK2. In terms of assembly, (Microbial infection) Interacts with human herpes simplex virus 1 (HHV-1) protein US11 in an RNA-dependent manner. (Microbial infection) The inactive form interacts with Toscana virus (TOS) NSS. As to quaternary structure, (Microbial infection) Interacts with herpes virus 8 protein v-IRF2; this interaction inhibits EIF2AK2 activation. In terms of assembly, (Microbial infection) Interacts with vaccinia protein E3. (Microbial infection) Interacts (via N-terminus) with Hepatitis C virus (HCV) mature core protein (via N-terminus); this interaction induces the autophosphorylation of EIF2AK2. As to quaternary structure, (Microbial infection) Interacts with Hepatitis C virus (HCV) non-structural protein 5A (NS5A); this interaction leads to disruption of EIF2AK2 dimerization by NS5A. In terms of assembly, (Microbial infection) Interacts with Hepatitis C virus (HCV) envelope glycoprotein E2; this interaction inhibits EIF2AK2 and blocks its inhibitory effect on protein synthesis and cell growth. (Microbial infection) Interacts with human respiratory syncytial virus (HRSV) nucleoprotein; this interaction inhibits EIF2AK2 phosphorylation of EIF2S1 and blocks EIF2AK2-mediated translation shutoff. As to quaternary structure, (Microbial infection) Interacts with human herpesvirus 8 protein MTA/ORF57; this interaction inhibits stress granule formation. It depends on Mg(2+) as a cofactor. In terms of processing, autophosphorylated on several Ser, Thr and Tyr residues. Autophosphorylation of Thr-451 is dependent on Thr-446 and is stimulated by dsRNA binding and dimerization. Autophosphorylation apparently leads to the activation of the kinase. Tyrosine autophosphorylation is essential for efficient dsRNA-binding, dimerization, and kinase activation. As to expression, highly expressed in thymus, spleen and bone marrow compared to non-hematopoietic tissues such as small intestine, liver, or kidney tissues. Colocalizes with GSK3B and TAU in the Alzheimer disease (AD) brain. Elevated levels seen in breast and colon carcinomas, and which correlates with tumor progression and invasiveness or risk of progression.

Its subcellular location is the cytoplasm. The protein localises to the nucleus. It is found in the perinuclear region. It catalyses the reaction L-seryl-[protein] + ATP = O-phospho-L-seryl-[protein] + ADP + H(+). It carries out the reaction L-threonyl-[protein] + ATP = O-phospho-L-threonyl-[protein] + ADP + H(+). The enzyme catalyses L-tyrosyl-[protein] + ATP = O-phospho-L-tyrosyl-[protein] + ADP + H(+). With respect to regulation, initially produced in an inactive form and is activated by binding to viral dsRNA, which causes dimerization and autophosphorylation in the activation loop and stimulation of function. ISGylation can activate it in the absence of viral infection. Can also be activated by heparin, pro-inflammatory stimuli, growth factors, cytokines, oxidative stress and the cellular protein PRKRA. Activity is markedly stimulated by manganese ions. Activation is blocked by the viral components HIV-1 Tat protein and large amounts of HIV-1 trans-activation response (TAR) RNA element as well as by the cellular proteins TARBP2, DUS2L, NPM1, NCK1 and ADAR. Down-regulated by Toscana virus (TOS) and Rift valley fever virus (RVFV) NSS which promote its proteasomal degradation. Inhibited by vaccinia virus protein E3, probably via dsRNA sequestering. Functionally, IFN-induced dsRNA-dependent serine/threonine-protein kinase that phosphorylates the alpha subunit of eukaryotic translation initiation factor 2 (EIF2S1/eIF-2-alpha) and plays a key role in the innate immune response to viral infection. Inhibits viral replication via the integrated stress response (ISR): EIF2S1/eIF-2-alpha phosphorylation in response to viral infection converts EIF2S1/eIF-2-alpha in a global protein synthesis inhibitor, resulting to a shutdown of cellular and viral protein synthesis, while concomitantly initiating the preferential translation of ISR-specific mRNAs, such as the transcriptional activator ATF4. Exerts its antiviral activity on a wide range of DNA and RNA viruses including hepatitis C virus (HCV), hepatitis B virus (HBV), measles virus (MV) and herpes simplex virus 1 (HHV-1). Also involved in the regulation of signal transduction, apoptosis, cell proliferation and differentiation: phosphorylates other substrates including p53/TP53, PPP2R5A, DHX9, ILF3, IRS1 and the HHV-1 viral protein US11. In addition to serine/threonine-protein kinase activity, also has tyrosine-protein kinase activity and phosphorylates CDK1 at 'Tyr-4' upon DNA damage, facilitating its ubiquitination and proteasomal degradation. Either as an adapter protein and/or via its kinase activity, can regulate various signaling pathways (p38 MAP kinase, NF-kappa-B and insulin signaling pathways) and transcription factors (JUN, STAT1, STAT3, IRF1, ATF3) involved in the expression of genes encoding pro-inflammatory cytokines and IFNs. Activates the NF-kappa-B pathway via interaction with IKBKB and TRAF family of proteins and activates the p38 MAP kinase pathway via interaction with MAP2K6. Can act as both a positive and negative regulator of the insulin signaling pathway (ISP). Negatively regulates ISP by inducing the inhibitory phosphorylation of insulin receptor substrate 1 (IRS1) at 'Ser-312' and positively regulates ISP via phosphorylation of PPP2R5A which activates FOXO1, which in turn up-regulates the expression of insulin receptor substrate 2 (IRS2). Can regulate NLRP3 inflammasome assembly and the activation of NLRP3, NLRP1, AIM2 and NLRC4 inflammasomes. Plays a role in the regulation of the cytoskeleton by binding to gelsolin (GSN), sequestering the protein in an inactive conformation away from actin. The polypeptide is Interferon-induced, double-stranded RNA-activated protein kinase (EIF2AK2) (Homo sapiens (Human)).